The primary structure comprises 286 residues: Pantothenate synthetase (286 aa).

30–37 is an ATP binding site; that stretch reads MGNLHEGH. The active-site Proton donor is the histidine 37. Residue glutamine 61 coordinates (R)-pantoate. Glutamine 61 contributes to the beta-alanine binding site. An ATP-binding site is contributed by 149–152; that stretch reads GRKD. Glutamine 155 contributes to the (R)-pantoate binding site. ATP is bound by residues valine 178 and 186–189; that span reads MSSR.

Belongs to the pantothenate synthetase family. In terms of assembly, homodimer.

Its subcellular location is the cytoplasm. The enzyme catalyses (R)-pantoate + beta-alanine + ATP = (R)-pantothenate + AMP + diphosphate + H(+). It participates in cofactor biosynthesis; (R)-pantothenate biosynthesis; (R)-pantothenate from (R)-pantoate and beta-alanine: step 1/1. Functionally, catalyzes the condensation of pantoate with beta-alanine in an ATP-dependent reaction via a pantoyl-adenylate intermediate. This is Pantothenate synthetase from Alkalilimnicola ehrlichii (strain ATCC BAA-1101 / DSM 17681 / MLHE-1).